We begin with the raw amino-acid sequence, 2694 residues long: Neurobeachin-like protein 1 (2694 aa).

Disordered stretches follow at residues 1289 to 1314 (VLMK…TDEE), 1330 to 1350 (SLED…DSSV), and 1381 to 1411 (CEMS…SVHS). A compositionally biased stretch (basic and acidic residues) spans 1290–1314 (LMKDNDKNMSTEDTKKNSDEKTDEE). Polar residues predominate over residues 1383-1409 (MSDSGSQVPDSLPSTPSPVESTKSFSV). Residues 1883–1980 (DQKEKLVLME…VRNKIYSRLL (98 aa)) form the BEACH-type PH domain. The 293-residue stretch at 1992–2284 (RSPQELFKAS…QLLKEPHPPR (293 aa)) folds into the BEACH domain. WD repeat units follow at residues 2439 to 2478 (RHMD…GVPV) and 2490 to 2531 (GHTN…RTLR).

It belongs to the WD repeat neurobeachin family. In terms of tissue distribution, highly expressed in brain, kidney, prostate and testis. Weakly expressed in ovary, small intestine, colon and peripheral blood leukocytes. May be correlative to several tumors, such as ovary serous adenocarcinoma and metastasis mammary gland carcinoma breast.

The polypeptide is Neurobeachin-like protein 1 (NBEAL1) (Homo sapiens (Human)).